The chain runs to 95 residues: MAKKSLIQKNKLIFKNSKKNFKIIIIKNKLKKKFTFNLLLKIQSIKKKKLKTKFINRCYISGRTRSFYNRFSLNRNLIRKIGNFGYITGIEKSSW.

This sequence belongs to the universal ribosomal protein uS14 family. As to quaternary structure, part of the 30S ribosomal subunit. Contacts proteins S3 and S10.

Its function is as follows. Binds 16S rRNA, required for the assembly of 30S particles and may also be responsible for determining the conformation of the 16S rRNA at the A site. This chain is Small ribosomal subunit protein uS14 (rpsN), found in Carsonella ruddii.